The chain runs to 380 residues: Chaperone protein DnaJ (380 aa).

The segment at 1–48 (MAKKDYYDTLGVPKNASDDDIKKAYRKLAMKHHPDRNQGDKSKVSEEK) is disordered. One can recognise a J domain in the interval 5–72 (DYYDTLGVPK…NKRMAYDQYG (68 aa)). The span at 24–34 (AYRKLAMKHHP) shows a compositional bias: basic residues. Basic and acidic residues predominate over residues 35 to 48 (DRNQGDKSKVSEEK). The segment at 139-217 (GKEAQIRIPS…CHGVGKTKNN (79 aa)) adopts a CR-type zinc-finger fold. The Zn(2+) site is built by C152, C155, C169, C172, C191, C194, C205, and C208. CXXCXGXG motif repeat units follow at residues 152-159 (CNTCHGSG), 169-176 (CTTCHGHG), 191-198 (CPQCKGTG), and 205-212 (CVACHGVG). Residues 357 to 380 (KKGGARHSPSEEGWADKLKSFFSA) form a disordered region. Over residues 364–380 (SPSEEGWADKLKSFFSA) the composition is skewed to basic and acidic residues.

The protein belongs to the DnaJ family. Homodimer. Zn(2+) serves as cofactor.

Its subcellular location is the cytoplasm. In terms of biological role, participates actively in the response to hyperosmotic and heat shock by preventing the aggregation of stress-denatured proteins and by disaggregating proteins, also in an autonomous, DnaK-independent fashion. Unfolded proteins bind initially to DnaJ; upon interaction with the DnaJ-bound protein, DnaK hydrolyzes its bound ATP, resulting in the formation of a stable complex. GrpE releases ADP from DnaK; ATP binding to DnaK triggers the release of the substrate protein, thus completing the reaction cycle. Several rounds of ATP-dependent interactions between DnaJ, DnaK and GrpE are required for fully efficient folding. Also involved, together with DnaK and GrpE, in the DNA replication of plasmids through activation of initiation proteins. This Polaromonas sp. (strain JS666 / ATCC BAA-500) protein is Chaperone protein DnaJ.